The following is a 344-amino-acid chain: Small ribosomal subunit protein uS3 (344 aa).

In terms of domain architecture, KH type-2 spans 38–106 (LKAALRERLK…EVFIDIQEVH (69 aa)). Residues 217 to 344 (PEPEPRREQR…QKPEGSGENQ (128 aa)) are disordered. 2 stretches are compositionally biased toward basic and acidic residues: residues 219–259 (PEPR…RGDR) and 335–344 (QKPEGSGENQ).

The protein belongs to the universal ribosomal protein uS3 family. Part of the 30S ribosomal subunit. Forms a tight complex with proteins S10 and S14.

In terms of biological role, binds the lower part of the 30S subunit head. Binds mRNA in the 70S ribosome, positioning it for translation. In Solibacter usitatus (strain Ellin6076), this protein is Small ribosomal subunit protein uS3.